A 407-amino-acid chain; its full sequence is Multifunctional CCA protein (407 aa).

ATP-binding residues include glycine 8 and arginine 11. Positions 8 and 11 each coordinate CTP. 2 residues coordinate Mg(2+): aspartate 21 and aspartate 23. ATP-binding residues include arginine 91, arginine 137, and arginine 140. CTP is bound by residues arginine 91, arginine 137, and arginine 140. The HD domain occupies 228–329; sequence TGIHTLLVAE…VKIFNKLDVW (102 aa).

The protein belongs to the tRNA nucleotidyltransferase/poly(A) polymerase family. Bacterial CCA-adding enzyme type 1 subfamily. In terms of assembly, monomer. Can also form homodimers and oligomers. The cofactor is Mg(2+). Ni(2+) serves as cofactor.

The catalysed reaction is a tRNA precursor + 2 CTP + ATP = a tRNA with a 3' CCA end + 3 diphosphate. It catalyses the reaction a tRNA with a 3' CCA end + 2 CTP + ATP = a tRNA with a 3' CCACCA end + 3 diphosphate. In terms of biological role, catalyzes the addition and repair of the essential 3'-terminal CCA sequence in tRNAs without using a nucleic acid template. Adds these three nucleotides in the order of C, C, and A to the tRNA nucleotide-73, using CTP and ATP as substrates and producing inorganic pyrophosphate. tRNA 3'-terminal CCA addition is required both for tRNA processing and repair. Also involved in tRNA surveillance by mediating tandem CCA addition to generate a CCACCA at the 3' terminus of unstable tRNAs. While stable tRNAs receive only 3'-terminal CCA, unstable tRNAs are marked with CCACCA and rapidly degraded. This Vibrio vulnificus (strain CMCP6) protein is Multifunctional CCA protein.